The sequence spans 745 residues: uncharacterized protein (745 aa).

Residues 158 to 256 enclose the HTH araC/xylS-type domain; it reads NQVCDYIELH…HQTPKQYRGD (99 aa). 2 DNA-binding regions (H-T-H motif) span residues 175-196 and 223-246; these read SELS…TESL and ITDI…KHFT.

This is an uncharacterized protein from Staphylococcus aureus (strain COL).